We begin with the raw amino-acid sequence, 451 residues long: Phosphoglucosamine mutase (451 aa).

The active-site Phosphoserine intermediate is S102. Mg(2+) is bound by residues S102, D242, D244, and D246. S102 is modified (phosphoserine).

This sequence belongs to the phosphohexose mutase family. Requires Mg(2+) as cofactor. Post-translationally, activated by phosphorylation.

The catalysed reaction is alpha-D-glucosamine 1-phosphate = D-glucosamine 6-phosphate. Its function is as follows. Catalyzes the conversion of glucosamine-6-phosphate to glucosamine-1-phosphate. The sequence is that of Phosphoglucosamine mutase from Staphylococcus epidermidis (strain ATCC 35984 / DSM 28319 / BCRC 17069 / CCUG 31568 / BM 3577 / RP62A).